A 552-amino-acid polypeptide reads, in one-letter code: MSTKTVIRSQTSHRGFSAGSARLPGLNRSGFSSVSVCRSRGSGGSRAVCGGAGFGSRSLCGVGSSQRISIGGGSCGIGGGYGGRFGGSFGYGGGAGGSLGFGAGAGFGGGYGGAGFPVCPPGGIQEVTINQSLLTPMNLQIDPTIQRVRTEEREQIKTLNNKFASFIDKVRFLEQQNKVLDTKWALLQEQGTKTVRQGLETLFEQYINDLRKELDNILGQRGRLDSELRNMQGTVEDYKSKYEDEINRRTAAENEFVTLKKDVDAAYMNKVELQAKADSLTDEINFLRALYEAELSQMQTHISDTSVVLSMDNNRSLDLDSIIAEVKAQYEEIAKRSRAEAESWYQTKYEELQITAGRHGDDLRNTKQEISEINRMIQRLRSEIDHVKKQIANLQAAIAEAEQRGEMALKDARGKLEGLEDALQKAKQDMARLLKEYQDLMNVKLALDVEIATYRTLLEGEECRLNGEGVGPVNISVVQSTVSSSYGSAGGASSSIGLGGSSSFSYGGSHSIGGGFSAGSGRGISSGLSSSGGSSSTIKYTTTSSTRKSYRP.

Over residues 1–14 the composition is skewed to polar residues; the sequence is MSTKTVIRSQTSHR. The disordered stretch occupies residues 1-21; it reads MSTKTVIRSQTSHRGFSAGSA. Residues 1 to 151 form a head region; the sequence is MSTKTVIRSQ…DPTIQRVRTE (151 aa). A coil 1A region spans residues 152 to 187; that stretch reads EREQIKTLNNKFASFIDKVRFLEQQNKVLDTKWALL. Residues 152–465 enclose the IF rod domain; that stretch reads EREQIKTLNN…TLLEGEECRL (314 aa). A linker 1 region spans residues 188–206; sequence QEQGTKTVRQGLETLFEQY. The coil 1B stretch occupies residues 207–298; it reads INDLRKELDN…ALYEAELSQM (92 aa). The tract at residues 299-322 is linker 12; it reads QTHISDTSVVLSMDNNRSLDLDSI. Residues 323 to 461 are coil 2; it reads IAEVKAQYEE…ATYRTLLEGE (139 aa). The segment at 462–552 is tail; that stretch reads ECRLNGEGVG…TSSTRKSYRP (91 aa). The segment at 524–552 is disordered; sequence ISSGLSSSGGSSSTIKYTTTSSTRKSYRP. Residues 525–552 are compositionally biased toward low complexity; that stretch reads SSGLSSSGGSSSTIKYTTTSSTRKSYRP.

This sequence belongs to the intermediate filament family. Heterodimer of a type I and a type II keratin. KRT6 isomers associate with KRT16 and/or KRT17. Interacts with TCHP.

Epidermis-specific type I keratin involved in wound healing. Involved in the activation of follicular keratinocytes after wounding, while it does not play a major role in keratinocyte proliferation or migration. Participates in the regulation of epithelial migration by inhibiting the activity of SRC during wound repair. The polypeptide is Keratin, type II cytoskeletal 6A (Krt6a) (Rattus norvegicus (Rat)).